The following is a 333-amino-acid chain: Fructose-1,6-bisphosphatase class 1 (333 aa).

Mg(2+) contacts are provided by Glu90, Asp112, Leu114, and Asp115. Substrate is bound by residues 115 to 118 (DGSS), Asn207, and Lys273. Glu279 provides a ligand contact to Mg(2+).

It belongs to the FBPase class 1 family. In terms of assembly, homotetramer. The cofactor is Mg(2+).

It is found in the cytoplasm. The catalysed reaction is beta-D-fructose 1,6-bisphosphate + H2O = beta-D-fructose 6-phosphate + phosphate. It functions in the pathway carbohydrate biosynthesis; gluconeogenesis. The protein is Fructose-1,6-bisphosphatase class 1 of Aromatoleum aromaticum (strain DSM 19018 / LMG 30748 / EbN1) (Azoarcus sp. (strain EbN1)).